Reading from the N-terminus, the 331-residue chain is Phosphoribosylformylglycinamidine cyclo-ligase (331 aa).

This sequence belongs to the AIR synthase family.

Its subcellular location is the cytoplasm. The enzyme catalyses 2-formamido-N(1)-(5-O-phospho-beta-D-ribosyl)acetamidine + ATP = 5-amino-1-(5-phospho-beta-D-ribosyl)imidazole + ADP + phosphate + H(+). It participates in purine metabolism; IMP biosynthesis via de novo pathway; 5-amino-1-(5-phospho-D-ribosyl)imidazole from N(2)-formyl-N(1)-(5-phospho-D-ribosyl)glycinamide: step 2/2. The chain is Phosphoribosylformylglycinamidine cyclo-ligase from Clostridium botulinum (strain 657 / Type Ba4).